A 110-amino-acid chain; its full sequence is Cell cycle protein GpsB (110 aa).

Residues 32 to 73 (LDDVIKDYENYLEQIEKLQMENRRLQQALDKKESEASNVRNS) adopt a coiled-coil conformation.

This sequence belongs to the GpsB family. Forms polymers through the coiled coil domains. Interacts with PBP1, MreC and EzrA.

The protein localises to the cytoplasm. Functionally, divisome component that associates with the complex late in its assembly, after the Z-ring is formed, and is dependent on DivIC and PBP2B for its recruitment to the divisome. Together with EzrA, is a key component of the system that regulates PBP1 localization during cell cycle progression. Its main role could be the removal of PBP1 from the cell pole after pole maturation is completed. Also contributes to the recruitment of PBP1 to the division complex. Not essential for septum formation. This Streptococcus agalactiae serotype Ia (strain ATCC 27591 / A909 / CDC SS700) protein is Cell cycle protein GpsB.